The following is a 489-amino-acid chain: MSIWQRVSFTHRFSQLPSAFYTLVEPQPLDNTRWVAWNGEFAQQFGLPAAQNDELLAVFSGQSEFEPFRPLAMKYAGHQFGVYNPDLGDGRGLLLAEIEHQNGTWFDIHLKGAGLTPYSRMGDGRAVLRSTIREYLCSEAMAGLGIPTTRALGMVVSDTPVYREKTEFGAMLIRMAETHVRFGHFEHLFYTNQLAEQKLLADKVIEWHFADCASAEKPYAAMFGEIVQKTADMIAYWQAYGFAHGVMNTDNMSILGQTFDYGPFGFLDDYEPGYICNHSDYQGRYAFEQQPRIALWNLSALAHALSPLVEREDLEQALSQFEGRLSQQFSRLMRSKLGLKTKIAEDGRLFESMFELLNQNHTDYTRFFRALSNLDKQPAQEVIDLFIDREAAQAWLDLYLARCELEVDEIGEPISAEQRSEQMRQTNPKYILRNYLAQLAIDKAEEGDFSEVHRLAEILRHPYDSQPEFEAYAKLPPEWGKKMEISCSS.

ATP contacts are provided by glycine 88, glycine 90, arginine 91, lysine 111, aspartate 123, glycine 124, arginine 174, and arginine 181. Aspartate 250 (proton acceptor) is an active-site residue. Residues asparagine 251 and aspartate 260 each coordinate Mg(2+). Residue aspartate 260 coordinates ATP.

This sequence belongs to the SELO family. The cofactor is Mg(2+). Requires Mn(2+) as cofactor.

It catalyses the reaction L-seryl-[protein] + ATP = 3-O-(5'-adenylyl)-L-seryl-[protein] + diphosphate. The enzyme catalyses L-threonyl-[protein] + ATP = 3-O-(5'-adenylyl)-L-threonyl-[protein] + diphosphate. It carries out the reaction L-tyrosyl-[protein] + ATP = O-(5'-adenylyl)-L-tyrosyl-[protein] + diphosphate. The catalysed reaction is L-histidyl-[protein] + UTP = N(tele)-(5'-uridylyl)-L-histidyl-[protein] + diphosphate. It catalyses the reaction L-seryl-[protein] + UTP = O-(5'-uridylyl)-L-seryl-[protein] + diphosphate. The enzyme catalyses L-tyrosyl-[protein] + UTP = O-(5'-uridylyl)-L-tyrosyl-[protein] + diphosphate. Functionally, nucleotidyltransferase involved in the post-translational modification of proteins. It can catalyze the addition of adenosine monophosphate (AMP) or uridine monophosphate (UMP) to a protein, resulting in modifications known as AMPylation and UMPylation. In Vibrio parahaemolyticus serotype O3:K6 (strain RIMD 2210633), this protein is Protein nucleotidyltransferase YdiU.